A 715-amino-acid polypeptide reads, in one-letter code: Fatty acid oxidation complex subunit alpha (715 aa).

The interval 1-189 (MIYQGETLTV…KVGAIDAVVA (189 aa)) is enoyl-CoA hydratase/isomerase. Residue Asp-296 participates in substrate binding. A 3-hydroxyacyl-CoA dehydrogenase region spans residues 311–715 (AKATSHAAVL…EMAAQGKTFY (405 aa)). NAD(+) is bound by residues Met-325, Asp-344, 401–403 (VVE), Lys-408, and Ser-430. His-451 functions as the For 3-hydroxyacyl-CoA dehydrogenase activity in the catalytic mechanism. NAD(+) is bound at residue Asn-454. Residues Asn-501 and Tyr-661 each contribute to the substrate site.

In the N-terminal section; belongs to the enoyl-CoA hydratase/isomerase family. It in the C-terminal section; belongs to the 3-hydroxyacyl-CoA dehydrogenase family. In terms of assembly, heterotetramer of two alpha chains (FadB) and two beta chains (FadA).

It catalyses the reaction a (3S)-3-hydroxyacyl-CoA + NAD(+) = a 3-oxoacyl-CoA + NADH + H(+). It carries out the reaction a (3S)-3-hydroxyacyl-CoA = a (2E)-enoyl-CoA + H2O. The catalysed reaction is a 4-saturated-(3S)-3-hydroxyacyl-CoA = a (3E)-enoyl-CoA + H2O. The enzyme catalyses (3S)-3-hydroxybutanoyl-CoA = (3R)-3-hydroxybutanoyl-CoA. It catalyses the reaction a (3Z)-enoyl-CoA = a 4-saturated (2E)-enoyl-CoA. It carries out the reaction a (3E)-enoyl-CoA = a 4-saturated (2E)-enoyl-CoA. It functions in the pathway lipid metabolism; fatty acid beta-oxidation. Functionally, involved in the aerobic and anaerobic degradation of long-chain fatty acids via beta-oxidation cycle. Catalyzes the formation of 3-oxoacyl-CoA from enoyl-CoA via L-3-hydroxyacyl-CoA. It can also use D-3-hydroxyacyl-CoA and cis-3-enoyl-CoA as substrate. The chain is Fatty acid oxidation complex subunit alpha from Aeromonas hydrophila subsp. hydrophila (strain ATCC 7966 / DSM 30187 / BCRC 13018 / CCUG 14551 / JCM 1027 / KCTC 2358 / NCIMB 9240 / NCTC 8049).